Reading from the N-terminus, the 288-residue chain is Small ribosomal subunit protein uS15m (288 aa).

Residues Met-1–Lys-50 constitute a mitochondrion transit peptide.

It belongs to the universal ribosomal protein uS15 family. Component of the mitochondrial small ribosomal subunit (mt-SSU). Mature yeast 74S mitochondrial ribosomes consist of a small (37S) and a large (54S) subunit. The 37S small subunit contains a 15S ribosomal RNA (15S mt-rRNA) and at least 32 different proteins. The 54S large subunit contains a 21S rRNA (21S mt-rRNA) and at least 45 different proteins.

It is found in the mitochondrion. In terms of biological role, component of the mitochondrial ribosome (mitoribosome), a dedicated translation machinery responsible for the synthesis of mitochondrial genome-encoded proteins, including at least some of the essential transmembrane subunits of the mitochondrial respiratory chain. The mitoribosomes are attached to the mitochondrial inner membrane and translation products are cotranslationally integrated into the membrane. This is Small ribosomal subunit protein uS15m (mrps28) from Schizosaccharomyces pombe (strain 972 / ATCC 24843) (Fission yeast).